The following is a 194-amino-acid chain: MQGPRERMVVSAALLIRERGAHATAISDVLQHSGAPRGSAYHYFPGGRTQLLCEAVDYAGEHVAAMINEAEGGLELLDALIDKYRQQLLSTDFRAGCPIAAVSVEAGDEQDRERMAPVIARAAAVFDRWSDLTAQRFIADGIPPDRAHELAVLATSTLEGAILLARVRRDLTPLDLVHRQLRNLLLAELPERSR.

One can recognise an HTH tetR-type domain in the interval Gln-2–His-62. The H-T-H motif DNA-binding region spans Ala-25–Phe-44.

This is an uncharacterized protein from Mycobacterium tuberculosis (strain CDC 1551 / Oshkosh).